A 139-amino-acid polypeptide reads, in one-letter code: ATP synthase epsilon chain (139 aa).

It belongs to the ATPase epsilon chain family. In terms of assembly, F-type ATPases have 2 components, CF(1) - the catalytic core - and CF(0) - the membrane proton channel. CF(1) has five subunits: alpha(3), beta(3), gamma(1), delta(1), epsilon(1). CF(0) has three main subunits: a, b and c.

The protein localises to the cell inner membrane. Functionally, produces ATP from ADP in the presence of a proton gradient across the membrane. This is ATP synthase epsilon chain from Acinetobacter baumannii (strain SDF).